The following is a 70-amino-acid chain: Large ribosomal subunit protein eL38 (70 aa).

This sequence belongs to the eukaryotic ribosomal protein eL38 family.

The polypeptide is Large ribosomal subunit protein eL38 (RpL38) (Anopheles gambiae (African malaria mosquito)).